We begin with the raw amino-acid sequence, 860 residues long: Alanine--tRNA ligase (860 aa).

Zn(2+) contacts are provided by His-563, His-567, Cys-665, and His-669. The segment at 824-843 (VGGKGGGRPDMAQAGGTDSS) is disordered.

The protein belongs to the class-II aminoacyl-tRNA synthetase family. Zn(2+) is required as a cofactor.

Its subcellular location is the cytoplasm. The enzyme catalyses tRNA(Ala) + L-alanine + ATP = L-alanyl-tRNA(Ala) + AMP + diphosphate. Functionally, catalyzes the attachment of alanine to tRNA(Ala) in a two-step reaction: alanine is first activated by ATP to form Ala-AMP and then transferred to the acceptor end of tRNA(Ala). Also edits incorrectly charged Ser-tRNA(Ala) and Gly-tRNA(Ala) via its editing domain. The sequence is that of Alanine--tRNA ligase from Vibrio vulnificus (strain YJ016).